The sequence spans 929 residues: MGLCLAQLAVTCLFLVPFVLSQVTEFVSIDCGCSSNYTDPRTGLGWVSDSEIIKQGKPVTLANTNWNSMQYRRRRDFPTDNKKYCYRLSTKERRRYIVRTTFLYGGLGSEEAYPKFQLYLDATKWATVTIQEVSRVYVEELIVRATSSYVDVCVCCAITGSPFMSTLELRPLNLSMYATDYEDNFFLKVAARVNFGAPNMDALRYPDDPYDRIWESDINKRPNYLVGVAPGTTRINTSKTINTLTREYPPMKVMQTAVVGTQGLISYRLNLEDFPANARAYAYFAEIEELGANETRKFKLVQPYFPDYSNAVVNIAENANGSYTLYEPSYMNVTLDFVLTFSFGKTKDSTQGPLLNAIEISKYLPISVKTDRSDVSVLDAIRSMSPDSDWASEGGDPCIPVLWSWVNCSSTSPPRVTKIALSRKNLRGEIPPGINYMEALTELWLDDNELTGTLPDMSKLVNLKIMHLENNQLSGSLPPYLAHLPNLQELSIENNSFKGKIPSALLKGKVLFKYNNNPELQNEAQRKHFWQILGISIAAVAILLLLVGGSLVLLCALRKTKRADKGDSTETKKKGLVAYSAVRGGHLLDEGVAYFISLPVLEEATDNFSKKVGRGSFGSVYYGRMKDGKEVAVKITADPSSHLNRQFVTEVALLSRIHHRNLVPLIGYCEEADRRILVYEYMHNGSLGDHLHGSSDYKPLDWLTRLQIAQDAAKGLEYLHTGCNPSIIHRDVKSSNILLDINMRAKVSDFGLSRQTEEDLTHVSSVAKGTVGYLDPEYYASQQLTEKSDVYSFGVVLFELLSGKKPVSAEDFGPELNIVHWARSLIRKGDVCGIIDPCIASNVKIESVWRVAEVANQCVEQRGHNRPRMQEVIVAIQDAIRIERGNENGLKSSSSSSSKAQSSRKTLLTSFLELESPDISRNSLAPAAR.

An N-terminal signal peptide occupies residues Met-1–Ser-21. Residues Gln-22–Gln-531 are Extracellular-facing. Asn-36, Asn-173, Asn-236, Asn-293, Asn-320, Asn-332, and Asn-407 each carry an N-linked (GlcNAc...) asparagine glycan. LRR repeat units lie at residues Pro-413–Met-437, Glu-438–Leu-460, Val-461–Leu-484, and Pro-485–Gly-508. N-linked (GlcNAc...) asparagine glycosylation is present at Asn-494. Residues Ile-532–Val-552 form a helical membrane-spanning segment. Topologically, residues Leu-553–Arg-929 are cytoplasmic. Residues Asp-606 to Ile-880 form the Protein kinase domain. ATP is bound by residues Val-612 to Val-620 and Lys-634. Tyr-679 carries the phosphotyrosine modification. Asp-731 serves as the catalytic Proton acceptor. Ser-735 and Ser-764 each carry phosphoserine. Residue Thr-770 is modified to Phosphothreonine. The residue at position 778 (Tyr-778) is a Phosphotyrosine.

It belongs to the protein kinase superfamily. Ser/Thr protein kinase family.

The protein localises to the membrane. The catalysed reaction is L-seryl-[protein] + ATP = O-phospho-L-seryl-[protein] + ADP + H(+). It catalyses the reaction L-threonyl-[protein] + ATP = O-phospho-L-threonyl-[protein] + ADP + H(+). This chain is Probable LRR receptor-like serine/threonine-protein kinase At1g67720, found in Arabidopsis thaliana (Mouse-ear cress).